Reading from the N-terminus, the 354-residue chain is Probable L-ascorbate-6-phosphate lactonase UlaG (354 aa).

It belongs to the UlaG family. Requires a divalent metal cation as cofactor.

The protein localises to the cytoplasm. It carries out the reaction L-ascorbate 6-phosphate + H2O = 3-dehydro-L-gulonate 6-phosphate. It functions in the pathway cofactor degradation; L-ascorbate degradation; D-xylulose 5-phosphate from L-ascorbate: step 1/4. Its function is as follows. Probably catalyzes the hydrolysis of L-ascorbate-6-P into 3-keto-L-gulonate-6-P. Is essential for L-ascorbate utilization under anaerobic conditions. This Escherichia coli O45:K1 (strain S88 / ExPEC) protein is Probable L-ascorbate-6-phosphate lactonase UlaG.